A 211-amino-acid chain; its full sequence is MRMRYKPWAEDYLKKEPNIVDIDGSHAGRISEWFDNDQPIYIEVGSGRGQFITTLAAKHPEINFISMEREKSVMIKVLDKVIEQGLTNIKLICNDAIELNDYFKDGEVSRLYLNFSDPWPKKRHTKRRLTYQTYLALYKQVLKDDGEIHFKTDNRGLFAYSLESMSQFGMYFTKINLNLHEEDDEENIETEYERKFSDKGSRIYRMEAKFH.

The S-adenosyl-L-methionine site is built by Glu43, Glu68, Asp95, and Asp117. Asp117 is a catalytic residue. Substrate contacts are provided by residues Lys121, Asp153, and 190 to 193 (TEYE).

This sequence belongs to the class I-like SAM-binding methyltransferase superfamily. TrmB family.

It catalyses the reaction guanosine(46) in tRNA + S-adenosyl-L-methionine = N(7)-methylguanosine(46) in tRNA + S-adenosyl-L-homocysteine. It participates in tRNA modification; N(7)-methylguanine-tRNA biosynthesis. Its function is as follows. Catalyzes the formation of N(7)-methylguanine at position 46 (m7G46) in tRNA. This chain is tRNA (guanine-N(7)-)-methyltransferase, found in Staphylococcus saprophyticus subsp. saprophyticus (strain ATCC 15305 / DSM 20229 / NCIMB 8711 / NCTC 7292 / S-41).